Reading from the N-terminus, the 314-residue chain is Aspartate carbamoyltransferase catalytic subunit (314 aa).

R58 and T59 together coordinate carbamoyl phosphate. K86 contacts L-aspartate. R108, H136, and Q139 together coordinate carbamoyl phosphate. Residues R169 and R223 each contribute to the L-aspartate site. Positions 264 and 265 each coordinate carbamoyl phosphate.

The protein belongs to the aspartate/ornithine carbamoyltransferase superfamily. ATCase family. As to quaternary structure, heterododecamer (2C3:3R2) of six catalytic PyrB chains organized as two trimers (C3), and six regulatory PyrI chains organized as three dimers (R2).

It catalyses the reaction carbamoyl phosphate + L-aspartate = N-carbamoyl-L-aspartate + phosphate + H(+). The protein operates within pyrimidine metabolism; UMP biosynthesis via de novo pathway; (S)-dihydroorotate from bicarbonate: step 2/3. In terms of biological role, catalyzes the condensation of carbamoyl phosphate and aspartate to form carbamoyl aspartate and inorganic phosphate, the committed step in the de novo pyrimidine nucleotide biosynthesis pathway. In Jannaschia sp. (strain CCS1), this protein is Aspartate carbamoyltransferase catalytic subunit.